The chain runs to 118 residues: Large ribosomal subunit protein uL18 (118 aa).

The protein belongs to the universal ribosomal protein uL18 family. As to quaternary structure, part of the 50S ribosomal subunit; part of the 5S rRNA/L5/L18/L25 subcomplex. Contacts the 5S and 23S rRNAs.

In terms of biological role, this is one of the proteins that bind and probably mediate the attachment of the 5S RNA into the large ribosomal subunit, where it forms part of the central protuberance. In Sulfurimonas denitrificans (strain ATCC 33889 / DSM 1251) (Thiomicrospira denitrificans (strain ATCC 33889 / DSM 1251)), this protein is Large ribosomal subunit protein uL18.